The sequence spans 315 residues: Zinc finger protein 691 (315 aa).

The segment covering 1–10 has biased composition (polar residues); the sequence is MSLCSPTHSA. The disordered stretch occupies residues 1–90; sequence MSLCSPTHSA…QETHPKKPWQ (90 aa). Residues 33-58 show a composition bias toward basic and acidic residues; the sequence is GSEKEQSPEPHLPEEGEGGKPWRVDD. Phosphoserine occurs at positions 39, 75, and 77. Lysine 113 is covalently cross-linked (Glycyl lysine isopeptide (Lys-Gly) (interchain with G-Cter in SUMO2)). 7 consecutive C2H2-type zinc fingers follow at residues 115 to 137, 143 to 165, 171 to 193, 199 to 221, 227 to 249, 255 to 277, and 283 to 305; these read FICA…QRIH, YKCS…ERIH, YKCP…QQDH, YRCD…HRTH, YICC…HRTH, YECT…QRTH, and YRCT…QKTH.

Belongs to the krueppel C2H2-type zinc-finger protein family.

Its subcellular location is the nucleus. Functionally, may be involved in transcriptional regulation. The chain is Zinc finger protein 691 (ZNF691) from Homo sapiens (Human).